The following is a 485-amino-acid chain: MTITPQHLIALLPLLIVGLTVVVVMLSIAWRRNHFLNATLSVIGLNAALVSLWFVGQAGAMDVTPLMRVDGFAMLYTGLVLLASLATCTFAYPWLEGYNDNQEEFYLLVLIASLGGILLANANHLAALFLGIELISLPLFGLIGYAFRQKRSLEASIKYTILSAAASSFLLFGMALVYAQSGNLSFEALGKSLGDGMLHEPLLLAGFGLMIVGLGFKLSLVPFHLWTPDVYQGAPAPVSTFLATASKIAIFGVVMRLFLYAPVGDSEAVRVVLGIIAFASIIFGNLMALSQTNIKRLLGYSSISHLGYLLVALIALQSGEMSMEAVGVYLAGYLFSSLGAFGVVSLMSSPFRGPDADSLYSYRGLFWHRPVLAAVMTVMMLSLAGIPMTLGFIGKFYVLAVGVQASLWWLVAAVVVGSAIGLYYYLRVAVSLYLHAPQQPGRDAPTNWQYSAGGIVVLISALLVLVLGVWPQPLISLVQLAMPLM.

The next 14 helical transmembrane spans lie at 8–28, 35–55, 71–91, 105–125, 127–147, 159–179, 203–223, 235–255, 271–291, 297–317, 326–346, 373–393, 408–430, and 455–475; these read LIAL…MLSI, FLNA…LWFV, GFAM…CTFA, FYLL…ANHL, ALFL…GYAF, YTIL…LVYA, LLAG…LVPF, PAPV…GVVM, VVLG…ALSQ, LLGY…IALQ, VGVY…VVSL, AAVM…LGFI, WWLV…RVAV, and IVVL…QPLI.

This sequence belongs to the complex I subunit 2 family. NDH-1 is composed of 13 different subunits. Subunits NuoA, H, J, K, L, M, N constitute the membrane sector of the complex.

Its subcellular location is the cell inner membrane. It carries out the reaction a quinone + NADH + 5 H(+)(in) = a quinol + NAD(+) + 4 H(+)(out). In terms of biological role, NDH-1 shuttles electrons from NADH, via FMN and iron-sulfur (Fe-S) centers, to quinones in the respiratory chain. The immediate electron acceptor for the enzyme in this species is believed to be ubiquinone. Couples the redox reaction to proton translocation (for every two electrons transferred, four hydrogen ions are translocated across the cytoplasmic membrane), and thus conserves the redox energy in a proton gradient. In Salmonella typhimurium (strain LT2 / SGSC1412 / ATCC 700720), this protein is NADH-quinone oxidoreductase subunit N.